The chain runs to 480 residues: Glutamyl-tRNA(Gln) amidotransferase subunit A (480 aa).

Catalysis depends on charge relay system residues lysine 74 and serine 149. Serine 173 acts as the Acyl-ester intermediate in catalysis.

The protein belongs to the amidase family. GatA subfamily. Heterotrimer of A, B and C subunits.

It catalyses the reaction L-glutamyl-tRNA(Gln) + L-glutamine + ATP + H2O = L-glutaminyl-tRNA(Gln) + L-glutamate + ADP + phosphate + H(+). Its function is as follows. Allows the formation of correctly charged Gln-tRNA(Gln) through the transamidation of misacylated Glu-tRNA(Gln) in organisms which lack glutaminyl-tRNA synthetase. The reaction takes place in the presence of glutamine and ATP through an activated gamma-phospho-Glu-tRNA(Gln). This is Glutamyl-tRNA(Gln) amidotransferase subunit A from Prochlorococcus marinus (strain MIT 9312).